Consider the following 223-residue polypeptide: Large ribosomal subunit protein uL3 (223 aa).

This sequence belongs to the universal ribosomal protein uL3 family. As to quaternary structure, part of the 50S ribosomal subunit. Forms a cluster with proteins L14 and L19.

One of the primary rRNA binding proteins, it binds directly near the 3'-end of the 23S rRNA, where it nucleates assembly of the 50S subunit. The sequence is that of Large ribosomal subunit protein uL3 from Nocardioides sp. (strain ATCC BAA-499 / JS614).